The following is a 356-amino-acid chain: Tyrosine recombinase XerS (356 aa).

The Core-binding (CB) domain maps to 16–121 (IMPWYVLDYY…ALSSLYKYLT (106 aa)). The Tyr recombinase domain occupies 169–354 (AFLDYVDKEY…VNDEQKNALD (186 aa)). Residues R210, K234, H306, R309, and H332 contribute to the active site. Y341 serves as the catalytic O-(3'-phospho-DNA)-tyrosine intermediate.

Belongs to the 'phage' integrase family. XerS subfamily.

The protein localises to the cytoplasm. With respect to regulation, ftsK is required for recombination. Its function is as follows. Site-specific tyrosine recombinase, which acts by catalyzing the cutting and rejoining of the recombining DNA molecules. Essential to convert dimers of the bacterial chromosome into monomers to permit their segregation at cell division. This chain is Tyrosine recombinase XerS, found in Streptococcus pyogenes serotype M49 (strain NZ131).